Reading from the N-terminus, the 137-residue chain is Probable 4-amino-4-deoxy-L-arabinose-phosphoundecaprenol flippase subunit ArnF (137 aa).

The Cytoplasmic portion of the chain corresponds to 1–3 (MNA). Residues 4 to 24 (LRGWLAALGSVLLASAAQLGM) traverse the membrane as a helical segment. Topologically, residues 25-44 (RWGMSRLPLPEAWAGQTPER) are periplasmic. Residues 45-65 (AALLAVALAVAAYAASLLCWL) form a helical membrane-spanning segment. The Cytoplasmic segment spans residues 66–76 (AALRHLPLGRA). A helical membrane pass occupies residues 77-97 (YSLLSASYALVYLLAASLPAF). Residues 98 to 100 (DET) are Periplasmic-facing. The helical transmembrane segment at 101–121 (FSTSKTLGVGLVVLGVLTVNA) threads the bilayer. The Cytoplasmic portion of the chain corresponds to 122–137 (RRTAAAPAHHPSRKAP).

Belongs to the ArnF family. In terms of assembly, heterodimer of ArnE and ArnF.

It is found in the cell inner membrane. Its pathway is bacterial outer membrane biogenesis; lipopolysaccharide biosynthesis. Its function is as follows. Translocates 4-amino-4-deoxy-L-arabinose-phosphoundecaprenol (alpha-L-Ara4N-phosphoundecaprenol) from the cytoplasmic to the periplasmic side of the inner membrane. This is Probable 4-amino-4-deoxy-L-arabinose-phosphoundecaprenol flippase subunit ArnF from Pseudomonas aeruginosa (strain ATCC 15692 / DSM 22644 / CIP 104116 / JCM 14847 / LMG 12228 / 1C / PRS 101 / PAO1).